The primary structure comprises 170 residues: Crossover junction endodeoxyribonuclease RuvC (170 aa).

Residues D11, E71, and D143 contribute to the active site. Residues D11, E71, and D143 each contribute to the Mg(2+) site.

The protein belongs to the RuvC family. Homodimer which binds Holliday junction (HJ) DNA. The HJ becomes 2-fold symmetrical on binding to RuvC with unstacked arms; it has a different conformation from HJ DNA in complex with RuvA. In the full resolvosome a probable DNA-RuvA(4)-RuvB(12)-RuvC(2) complex forms which resolves the HJ. It depends on Mg(2+) as a cofactor.

It is found in the cytoplasm. It carries out the reaction Endonucleolytic cleavage at a junction such as a reciprocal single-stranded crossover between two homologous DNA duplexes (Holliday junction).. Its function is as follows. The RuvA-RuvB-RuvC complex processes Holliday junction (HJ) DNA during genetic recombination and DNA repair. Endonuclease that resolves HJ intermediates. Cleaves cruciform DNA by making single-stranded nicks across the HJ at symmetrical positions within the homologous arms, yielding a 5'-phosphate and a 3'-hydroxyl group; requires a central core of homology in the junction. The consensus cleavage sequence is 5'-(A/T)TT(C/G)-3'. Cleavage occurs on the 3'-side of the TT dinucleotide at the point of strand exchange. HJ branch migration catalyzed by RuvA-RuvB allows RuvC to scan DNA until it finds its consensus sequence, where it cleaves and resolves the cruciform DNA. The chain is Crossover junction endodeoxyribonuclease RuvC from Agrobacterium fabrum (strain C58 / ATCC 33970) (Agrobacterium tumefaciens (strain C58)).